The following is a 334-amino-acid chain: Glyoxylate reductase (334 aa).

NADP(+) contacts are provided by residues 158–161, 180–182, and 239–241; these read FGRI, SRT, and IAR. Active-site residues include Arg-241 and Glu-270. The active-site Proton donor is His-288. 288-290 is an NADP(+) binding site; that stretch reads HIG.

The protein belongs to the D-isomer specific 2-hydroxyacid dehydrogenase family. GyaR subfamily. Homodimer.

Its subcellular location is the cytoplasm. It carries out the reaction glycolate + NAD(+) = glyoxylate + NADH + H(+). The polypeptide is Glyoxylate reductase (Thermococcus gammatolerans (strain DSM 15229 / JCM 11827 / EJ3)).